A 471-amino-acid polypeptide reads, in one-letter code: ATP synthase subunit beta (471 aa).

Residue 156–163 (GGAGVGKT) coordinates ATP.

The protein belongs to the ATPase alpha/beta chains family. F-type ATPases have 2 components, CF(1) - the catalytic core - and CF(0) - the membrane proton channel. CF(1) has five subunits: alpha(3), beta(3), gamma(1), delta(1), epsilon(1). CF(0) has three main subunits: a(1), b(2) and c(9-12). The alpha and beta chains form an alternating ring which encloses part of the gamma chain. CF(1) is attached to CF(0) by a central stalk formed by the gamma and epsilon chains, while a peripheral stalk is formed by the delta and b chains.

Its subcellular location is the cell inner membrane. It carries out the reaction ATP + H2O + 4 H(+)(in) = ADP + phosphate + 5 H(+)(out). Its function is as follows. Produces ATP from ADP in the presence of a proton gradient across the membrane. The catalytic sites are hosted primarily by the beta subunits. The protein is ATP synthase subunit beta of Nitratidesulfovibrio vulgaris (strain DSM 19637 / Miyazaki F) (Desulfovibrio vulgaris).